A 209-amino-acid chain; its full sequence is Large ribosomal subunit protein eL13 (209 aa).

It belongs to the eukaryotic ribosomal protein eL13 family. Component of the 60S large ribosomal subunit (LSU).

It is found in the cytoplasm. In terms of biological role, component of the ribosome, a large ribonucleoprotein complex responsible for the synthesis of proteins in the cell. The small ribosomal subunit (SSU) binds messenger RNAs (mRNAs) and translates the encoded message by selecting cognate aminoacyl-transfer RNA (tRNA) molecules. The large subunit (LSU) contains the ribosomal catalytic site termed the peptidyl transferase center (PTC), which catalyzes the formation of peptide bonds, thereby polymerizing the amino acids delivered by tRNAs into a polypeptide chain. The nascent polypeptides leave the ribosome through a tunnel in the LSU and interact with protein factors that function in enzymatic processing, targeting, and the membrane insertion of nascent chains at the exit of the ribosomal tunnel. As part of the LSU, it is probably required for its formation and the maturation of rRNAs. This Dictyostelium discoideum (Social amoeba) protein is Large ribosomal subunit protein eL13 (rpl13).